A 124-amino-acid polypeptide reads, in one-letter code: Large ribosomal subunit protein bL12 (124 aa).

The protein belongs to the bacterial ribosomal protein bL12 family. In terms of assembly, homodimer. Part of the ribosomal stalk of the 50S ribosomal subunit. Forms a multimeric L10(L12)X complex, where L10 forms an elongated spine to which 2 to 4 L12 dimers bind in a sequential fashion. Binds GTP-bound translation factors.

Functionally, forms part of the ribosomal stalk which helps the ribosome interact with GTP-bound translation factors. Is thus essential for accurate translation. The chain is Large ribosomal subunit protein bL12 from Borreliella burgdorferi (strain ZS7) (Borrelia burgdorferi).